The following is a 286-amino-acid chain: Release factor glutamine methyltransferase (286 aa).

Residues 122 to 126, aspartate 145, tryptophan 173, and asparagine 188 each bind S-adenosyl-L-methionine; that span reads GTGTG. 188–191 contributes to the substrate binding site; that stretch reads NPPY.

Belongs to the protein N5-glutamine methyltransferase family. PrmC subfamily.

The enzyme catalyses L-glutaminyl-[peptide chain release factor] + S-adenosyl-L-methionine = N(5)-methyl-L-glutaminyl-[peptide chain release factor] + S-adenosyl-L-homocysteine + H(+). Its function is as follows. Methylates the class 1 translation termination release factors RF1/PrfA and RF2/PrfB on the glutamine residue of the universally conserved GGQ motif. This Shewanella oneidensis (strain ATCC 700550 / JCM 31522 / CIP 106686 / LMG 19005 / NCIMB 14063 / MR-1) protein is Release factor glutamine methyltransferase.